The sequence spans 491 residues: MSETKRVRVRYAPSPTGFLHIGNARTALFNYLFARHNDGDFIIRIEDTDAKRNVADGEESQMKNLKWLGMDWDEGVDVPGKYGPYRQSERQSIYEPLIQQLLDEGLAYKCYCTEEELEAEREKQKANNEMPRYSGKCRHLTKEQQAEKEAQGFKPSIRFKVPANETITFNDMVKDDVSFESNGIGDFVIAKKDGIPTYNFAVAVDDHLMEISHVLRGDDHISNTPKQILIYNAFGWEPPTFGHMTLIVNESRRKLSKRDGSIIQFIEQYRDLGYLPEALFNFIAMLGWSPEGEEEIFSKEEFIKMFDPKRLSKSPALFDNVKLTWVNNQYVKKLPLNDVVELSLPHLQKAGVVSADLDQAELDWVHKLVSLYHEQMSYGAEIVPLSEMFFADAEAITFDEEEKAVLAEDTVPTVISAFKKELEALEVLEAAEVKAAIKRVQKETGVKGKGLFMPIRIVTTGEMHGPELPLAIEVLGREKVLNRMDTWLKNN.

A 'HIGH' region motif is present at residues 13–23 (PSPTGFLHIGN). C110, C112, C137, and H139 together coordinate Zn(2+). The short motif at 254–258 (KLSKR) is the 'KMSKS' region element. K257 is a binding site for ATP.

It belongs to the class-I aminoacyl-tRNA synthetase family. Glutamate--tRNA ligase type 1 subfamily. As to quaternary structure, monomer. Requires Zn(2+) as cofactor.

It localises to the cytoplasm. The enzyme catalyses tRNA(Glu) + L-glutamate + ATP = L-glutamyl-tRNA(Glu) + AMP + diphosphate. Catalyzes the attachment of glutamate to tRNA(Glu) in a two-step reaction: glutamate is first activated by ATP to form Glu-AMP and then transferred to the acceptor end of tRNA(Glu). In Listeria welshimeri serovar 6b (strain ATCC 35897 / DSM 20650 / CCUG 15529 / CIP 8149 / NCTC 11857 / SLCC 5334 / V8), this protein is Glutamate--tRNA ligase.